The sequence spans 116 residues: MRNSKTAISFFILVAVLGSQAGLIQEMEKEDRRYNPPIIHQGFQDTSSDCCFSYATQIPCKRFIYYFPTSGGCIKPGIIFISRRGTQVCADPSDRRVQRCLSTLKQGPRSGNKVIA.

Positions 1–21 are cleaved as a signal peptide; sequence MRNSKTAISFFILVAVLGSQA. 3 disulfides stabilise this stretch: Cys-50-Cys-73, Cys-51-Cys-89, and Cys-60-Cys-100.

This sequence belongs to the intercrine beta (chemokine CC) family. In terms of processing, the N-terminal is proteolytically cleaved by proteases associated with inflammatory responses. The processed forms CL6(22-95) and CCL6(23-95) show increase in CCR1-mediated signaling and chemotaxis assays in vitro. Expressed in myelopoietic bone marrow cultures stimulated by GM-CSF.

The protein resides in the secreted. Its function is as follows. Chemotactic factor that attracts mostly macrophage, but it can also attract B cells, CD4(+) lymphocytes and eosinophils. This Mus musculus (Mouse) protein is C-C motif chemokine 6 (Ccl6).